The primary structure comprises 70 residues: Large ribosomal subunit protein bL31 (70 aa).

Residues Cys-16, Cys-18, Cys-38, and Cys-41 each coordinate Zn(2+).

Belongs to the bacterial ribosomal protein bL31 family. Type A subfamily. In terms of assembly, part of the 50S ribosomal subunit. Zn(2+) serves as cofactor.

Its function is as follows. Binds the 23S rRNA. The polypeptide is Large ribosomal subunit protein bL31 (Mycolicibacterium gilvum (strain PYR-GCK) (Mycobacterium gilvum (strain PYR-GCK))).